The following is a 55-amino-acid chain: Large ribosomal subunit protein bL33A (55 aa).

This sequence belongs to the bacterial ribosomal protein bL33 family.

The chain is Large ribosomal subunit protein bL33A from Rhodococcus jostii (strain RHA1).